The primary structure comprises 256 residues: Floral homeotic protein APETALA 1 (256 aa).

In terms of domain architecture, MADS-box spans M1–S61. The K-box domain maps to N88–I178. Residues N88–Q185 adopt a coiled-coil conformation.

In terms of assembly, homodimer capable of binding to CArG-box sequences. Heterodimer with SEP3, AP1 and SVP. Binds AP3/PI to form a ternary complex. Interacts with the SEU-LUG corepressor complex when complexed to AGL24 or SVP. Interacts with AGL15 and AGL16. Interacts with TT16/AGL32. As to expression, expressed in young flower primordia, later becomes localized to sepals and petals.

It is found in the nucleus. Functionally, transcription factor that promotes early floral meristem identity in synergy with LEAFY. Is required subsequently for the transition of an inflorescence meristem into a floral meristem. Is indispensable for normal development of sepals and petals in flowers. Positively regulates the B class homeotic proteins APETALA3 and PISTILLATA with the cooperation of LEAFY and UFO. Interacts with SEPALLATA3 or AP3/PI heterodimer to form complexes that could be involved in genes regulation during floral meristem development. Positively regulates AGAMOUS in cooperation with LEAFY. Displays a redundant function with CAULIFLOWER in the up-regulation of LEAFY. Together with AGL24 and SVP, controls the identity of the floral meristem and regulates expression of class B, C and E genes. Represses flowering time genes AGL24, SVP and SOC1 in emerging floral meristems. The protein is Floral homeotic protein APETALA 1 (AP1) of Arabidopsis thaliana (Mouse-ear cress).